Here is a 302-residue protein sequence, read N- to C-terminus: Putative gluconeogenesis factor (302 aa).

This sequence belongs to the gluconeogenesis factor family.

The protein resides in the cytoplasm. Required for morphogenesis under gluconeogenic growth conditions. This is Putative gluconeogenesis factor (ybhK) from Salmonella typhimurium (strain LT2 / SGSC1412 / ATCC 700720).